We begin with the raw amino-acid sequence, 106 residues long: Small ribosomal subunit protein uS10 (106 aa).

The protein belongs to the universal ribosomal protein uS10 family. Part of the 30S ribosomal subunit.

Involved in the binding of tRNA to the ribosomes. The polypeptide is Small ribosomal subunit protein uS10 (Prochlorococcus marinus (strain MIT 9303)).